Reading from the N-terminus, the 261-residue chain is Protein FAM216A (261 aa).

Residues 1 to 52 are disordered; sequence MPSRCPGVAGPPALARTEGSEGSAGQSYHQNSKGTGEQHKAERIKEGHRMSS. The segment covering 23–35 has biased composition (polar residues); that stretch reads SAGQSYHQNSKGT. The span at 36 to 49 shows a compositional bias: basic and acidic residues; it reads GEQHKAERIKEGHR.

Belongs to the FAM216 family.

This Rattus norvegicus (Rat) protein is Protein FAM216A (Fam216a).